Reading from the N-terminus, the 373-residue chain is 4-hydroxy-3-methylbut-2-en-1-yl diphosphate synthase (flavodoxin) (373 aa).

4 residues coordinate [4Fe-4S] cluster: Cys-270, Cys-273, Cys-305, and Glu-312.

The protein belongs to the IspG family. The cofactor is [4Fe-4S] cluster.

The catalysed reaction is (2E)-4-hydroxy-3-methylbut-2-enyl diphosphate + oxidized [flavodoxin] + H2O + 2 H(+) = 2-C-methyl-D-erythritol 2,4-cyclic diphosphate + reduced [flavodoxin]. It functions in the pathway isoprenoid biosynthesis; isopentenyl diphosphate biosynthesis via DXP pathway; isopentenyl diphosphate from 1-deoxy-D-xylulose 5-phosphate: step 5/6. In terms of biological role, converts 2C-methyl-D-erythritol 2,4-cyclodiphosphate (ME-2,4cPP) into 1-hydroxy-2-methyl-2-(E)-butenyl 4-diphosphate. The polypeptide is 4-hydroxy-3-methylbut-2-en-1-yl diphosphate synthase (flavodoxin) (Vibrio atlanticus (strain LGP32) (Vibrio splendidus (strain Mel32))).